The following is a 171-amino-acid chain: ATP synthase subunit b (171 aa).

The helical transmembrane segment at 32 to 52 (FFAVLLIFLIVLGVIAKWVVP) threads the bilayer.

Belongs to the ATPase B chain family. F-type ATPases have 2 components, F(1) - the catalytic core - and F(0) - the membrane proton channel. F(1) has five subunits: alpha(3), beta(3), gamma(1), delta(1), epsilon(1). F(0) has three main subunits: a(1), b(2) and c(10-14). The alpha and beta chains form an alternating ring which encloses part of the gamma chain. F(1) is attached to F(0) by a central stalk formed by the gamma and epsilon chains, while a peripheral stalk is formed by the delta and b chains.

The protein resides in the cell membrane. In terms of biological role, f(1)F(0) ATP synthase produces ATP from ADP in the presence of a proton or sodium gradient. F-type ATPases consist of two structural domains, F(1) containing the extramembraneous catalytic core and F(0) containing the membrane proton channel, linked together by a central stalk and a peripheral stalk. During catalysis, ATP synthesis in the catalytic domain of F(1) is coupled via a rotary mechanism of the central stalk subunits to proton translocation. Functionally, component of the F(0) channel, it forms part of the peripheral stalk, linking F(1) to F(0). This is ATP synthase subunit b from Mycolicibacterium gilvum (strain PYR-GCK) (Mycobacterium gilvum (strain PYR-GCK)).